The primary structure comprises 416 residues: Probable pectate lyase 8 (416 aa).

Residues 1–24 (MAVTKLILFASALLLTALFIGVNA) form the signal peptide. N-linked (GlcNAc...) asparagine glycosylation is found at asparagine 23, asparagine 28, and asparagine 52. 3 residues coordinate Ca(2+): aspartate 214, aspartate 238, and aspartate 242. Arginine 294 is a catalytic residue.

This sequence belongs to the polysaccharide lyase 1 family. Requires Ca(2+) as cofactor.

The enzyme catalyses Eliminative cleavage of (1-&gt;4)-alpha-D-galacturonan to give oligosaccharides with 4-deoxy-alpha-D-galact-4-enuronosyl groups at their non-reducing ends.. The protein operates within glycan metabolism; pectin degradation; 2-dehydro-3-deoxy-D-gluconate from pectin: step 2/5. The sequence is that of Probable pectate lyase 8 from Arabidopsis thaliana (Mouse-ear cress).